The sequence spans 215 residues: Ion-translocating oxidoreductase complex subunit G (215 aa).

The helical transmembrane segment at 9 to 29 (GLLLSGFALICTAAVALVNEA) threads the bilayer. Thr176 carries the post-translational modification FMN phosphoryl threonine.

The protein belongs to the RnfG family. In terms of assembly, the complex is composed of six subunits: RnfA, RnfB, RnfC, RnfD, RnfE and RnfG. FMN is required as a cofactor.

It is found in the cell inner membrane. In terms of biological role, part of a membrane-bound complex that couples electron transfer with translocation of ions across the membrane. In Shewanella amazonensis (strain ATCC BAA-1098 / SB2B), this protein is Ion-translocating oxidoreductase complex subunit G.